The primary structure comprises 150 residues: Deoxyuridine 5'-triphosphate nucleotidohydrolase (150 aa).

Substrate-binding positions include 69-71 (RSG), asparagine 82, 86-88 (LID), and methionine 96.

Belongs to the dUTPase family. Mg(2+) serves as cofactor.

The catalysed reaction is dUTP + H2O = dUMP + diphosphate + H(+). It functions in the pathway pyrimidine metabolism; dUMP biosynthesis; dUMP from dCTP (dUTP route): step 2/2. In terms of biological role, this enzyme is involved in nucleotide metabolism: it produces dUMP, the immediate precursor of thymidine nucleotides and it decreases the intracellular concentration of dUTP so that uracil cannot be incorporated into DNA. In Leptothrix cholodnii (strain ATCC 51168 / LMG 8142 / SP-6) (Leptothrix discophora (strain SP-6)), this protein is Deoxyuridine 5'-triphosphate nucleotidohydrolase.